A 404-amino-acid chain; its full sequence is Glucose-1-phosphate adenylyltransferase (404 aa).

Residues Tyr99, Gly164, 179-180 (EK), and Ser197 contribute to the alpha-D-glucose 1-phosphate site.

This sequence belongs to the bacterial/plant glucose-1-phosphate adenylyltransferase family. As to quaternary structure, homotetramer.

It carries out the reaction alpha-D-glucose 1-phosphate + ATP + H(+) = ADP-alpha-D-glucose + diphosphate. It functions in the pathway glycan biosynthesis; glycogen biosynthesis. In terms of biological role, involved in the biosynthesis of ADP-glucose, a building block required for the elongation reactions to produce glycogen. Catalyzes the reaction between ATP and alpha-D-glucose 1-phosphate (G1P) to produce pyrophosphate and ADP-Glc. In Nocardia farcinica (strain IFM 10152), this protein is Glucose-1-phosphate adenylyltransferase.